A 2150-amino-acid chain; its full sequence is Genome polyprotein (2150 aa).

G2 carries N-myristoyl glycine; by host lipidation. Topologically, residues G2–T1463 are cytoplasmic. The tract at residues I565–V581 is amphipathic alpha-helix. The disordered stretch occupies residues P592–S611. Active-site for protease 2A activity residues include H868 and D885. Residues C902 and C904 each coordinate Zn(2+). Catalysis depends on C956, which acts as the For protease 2A activity. Residues C962 and H964 each contribute to the Zn(2+) site. Positions S1088–Q1157 are membrane-binding. The oligomerization stretch occupies residues S1088–T1221. The RNA-binding stretch occupies residues G1109–S1113. The SF3 helicase domain maps to E1181–V1343. 3 residues coordinate Zn(2+): C1350, C1361, and C1366. Residues C1350–C1366 form a C4-type; degenerate zinc finger. The RNA-binding stretch occupies residues E1393 to V1400. The segment at M1404–Q1409 is oligomerization. Residues I1464 to Y1479 lie within the membrane without spanning it. The Cytoplasmic segment spans residues K1480–F2150. Residue Y1489 is modified to O-(5'-phospho-RNA)-tyrosine. The region spanning G1508 to F1686 is the Peptidase C3 domain. Catalysis depends on for protease 3C activity residues H1547, E1578, and C1654. Residues K1918–A2031 form the RdRp catalytic domain. D1924 and D2017 together coordinate Mg(2+).

It belongs to the picornaviruses polyprotein family. Interacts with capsid protein VP1 and capsid protein VP3 to form heterotrimeric protomers. As to quaternary structure, interacts with capsid protein VP0, and capsid protein VP3 to form heterotrimeric protomers. Five protomers subsequently associate to form pentamers which serve as building blocks for the capsid. Interacts with capsid protein VP2, capsid protein VP3 and capsid protein VP4 following cleavage of capsid protein VP0. In terms of assembly, interacts with capsid protein VP1 and capsid protein VP3 in the mature capsid. Interacts with capsid protein VP0 and capsid protein VP1 to form heterotrimeric protomers. Five protomers subsequently associate to form pentamers which serve as building blocks for the capsid. Interacts with capsid protein VP4 in the mature capsid. Interacts with protein 2C; this interaction may be important for virion morphogenesis. As to quaternary structure, interacts with capsid protein VP1 and capsid protein VP3. In terms of assembly, homodimer. Homohexamer; forms a hexameric ring structure with 6-fold symmetry characteristic of AAA+ ATPases. Interacts (via N-terminus) with host RTN3 (via reticulon domain); this interaction is important for viral replication. Interacts with capsid protein VP3; this interaction may be important for virion morphogenesis. As to quaternary structure, interacts with protein 3CD. In terms of assembly, homodimer. Interacts with host GBF1. Interacts (via GOLD domain) with host ACBD3 (via GOLD domain); this interaction allows the formation of a viral protein 3A/ACBD3 heterotetramer with a 2:2 stoichiometry, which will stimulate the recruitment of host PI4KB in order to synthesize PI4P at the viral RNA replication sites. Interacts with RNA-directed RNA polymerase. As to quaternary structure, interacts with protein 3AB and with RNA-directed RNA polymerase. In terms of assembly, interacts with Viral protein genome-linked and with protein 3CD. Mg(2+) serves as cofactor. Post-translationally, specific enzymatic cleavages in vivo by the viral proteases yield processing intermediates and the mature proteins. Myristoylation is required for the formation of pentamers during virus assembly. Further assembly of 12 pentamers and a molecule of genomic RNA generates the provirion. In terms of processing, during virion maturation, immature virions are rendered infectious following cleavage of VP0 into VP4 and VP2. This maturation seems to be an autocatalytic event triggered by the presence of RNA in the capsid and it is followed by a conformational change infectious virion. Post-translationally, myristoylation is required during RNA encapsidation and formation of the mature virus particle. VPg is uridylylated by the polymerase into VPg-pUpU. This acts as a nucleotide-peptide primer for the genomic RNA replication.

The protein localises to the virion. It is found in the host cytoplasm. It localises to the host cytoplasmic vesicle membrane. The protein resides in the host nucleus. The enzyme catalyses a ribonucleoside 5'-triphosphate + H2O = a ribonucleoside 5'-diphosphate + phosphate + H(+). It carries out the reaction Selective cleavage of Tyr-|-Gly bond in the picornavirus polyprotein.. The catalysed reaction is RNA(n) + a ribonucleoside 5'-triphosphate = RNA(n+1) + diphosphate. It catalyses the reaction Selective cleavage of Gln-|-Gly bond in the poliovirus polyprotein. In other picornavirus reactions Glu may be substituted for Gln, and Ser or Thr for Gly.. Its activity is regulated as follows. Replication or transcription is subject to high level of random mutations by the nucleotide analog ribavirin. In terms of biological role, forms an icosahedral capsid of pseudo T=3 symmetry with capsid proteins VP2 and VP3. The capsid is 300 Angstroms in diameter, composed of 60 copies of each capsid protein and enclosing the viral positive strand RNA genome. Capsid protein VP1 mainly forms the vertices of the capsid. Capsid protein VP1 interacts with host cell receptor to provide virion attachment to target host cells. This attachment induces virion internalization. Tyrosine kinases are probably involved in the entry process. After binding to its receptor, the capsid undergoes conformational changes. Capsid protein VP1 N-terminus (that contains an amphipathic alpha-helix) and capsid protein VP4 are externalized. Together, they shape a pore in the host membrane through which viral genome is translocated to host cell cytoplasm. Its function is as follows. Forms an icosahedral capsid of pseudo T=3 symmetry with capsid proteins VP2 and VP3. The capsid is 300 Angstroms in diameter, composed of 60 copies of each capsid protein and enclosing the viral positive strand RNA genome. Functionally, lies on the inner surface of the capsid shell. After binding to the host receptor, the capsid undergoes conformational changes. Capsid protein VP4 is released, Capsid protein VP1 N-terminus is externalized, and together, they shape a pore in the host membrane through which the viral genome is translocated into the host cell cytoplasm. Component of immature procapsids, which is cleaved into capsid proteins VP4 and VP2 after maturation. Allows the capsid to remain inactive before the maturation step. In terms of biological role, cysteine protease that cleaves viral polyprotein and specific host proteins. It is responsible for the autocatalytic cleavage between the P1 and P2 regions, which is the first cleavage occurring in the polyprotein. Also cleaves the host translation initiation factor EIF4G1, in order to shut down the capped cellular mRNA translation. Inhibits the host nucleus-cytoplasm protein and RNA trafficking by cleaving host members of the nuclear pores. Counteracts stress granule formation probably by antagonizing its assembly or promoting its dissassembly. Its function is as follows. Plays an essential role in the virus replication cycle by acting as a viroporin. Creates a pore in the host endoplasmic reticulum and as a consequence releases Ca2+ in the cytoplasm of infected cell. In turn, high levels of cytoplasmic calcium may trigger membrane trafficking and transport of viral ER-associated proteins to viroplasms, sites of viral genome replication. Functionally, induces and associates with structural rearrangements of intracellular membranes. Displays RNA-binding, nucleotide binding and NTPase activities. May play a role in virion morphogenesis and viral RNA encapsidation by interacting with the capsid protein VP3. Localizes the viral replication complex to the surface of membranous vesicles. Together with protein 3CD binds the Cis-Active RNA Element (CRE) which is involved in RNA synthesis initiation. Acts as a cofactor to stimulate the activity of 3D polymerase, maybe through a nucleid acid chaperone activity. In terms of biological role, localizes the viral replication complex to the surface of membranous vesicles. It inhibits host cell endoplasmic reticulum-to-Golgi apparatus transport and causes the disassembly of the Golgi complex, possibly through GBF1 interaction. This would result in depletion of MHC, trail receptors and IFN receptors at the host cell surface. Plays an essential role in viral RNA replication by recruiting ACBD3 and PI4KB at the viral replication sites, thereby allowing the formation of the rearranged membranous structures where viral replication takes place. Its function is as follows. Acts as a primer for viral RNA replication and remains covalently bound to viral genomic RNA. VPg is uridylylated prior to priming replication into VPg-pUpU. The oriI viral genomic sequence may act as a template for this. The VPg-pUpU is then used as primer on the genomic RNA poly(A) by the RNA-dependent RNA polymerase to replicate the viral genome. During genome replication, the VPg-RNA linkage is removed by the host TDP2, thereby accelerating replication. During the late stage of the replication cycle, host TDP2 is excluded from sites of viral RNA synthesis and encapsidation, allowing for the generation of progeny virions. Functionally, involved in the viral replication complex and viral polypeptide maturation. It exhibits protease activity with a specificity and catalytic efficiency that is different from protease 3C. Protein 3CD lacks polymerase activity. Protein 3CD binds to the 5'UTR of the viral genome. Replicates the viral genomic RNA on the surface of intracellular membranes. May form linear arrays of subunits that propagate along a strong head-to-tail interaction called interface-I. Covalently attaches UMP to a tyrosine of VPg, which is used to prime RNA synthesis. The positive stranded RNA genome is first replicated at virus induced membranous vesicles, creating a dsRNA genomic replication form. This dsRNA is then used as template to synthesize positive stranded RNA genomes. ss(+)RNA genomes are either translated, replicated or encapsidated. In terms of biological role, major viral protease that mediates proteolytic processing of the polyprotein. Cleaves host EIF5B, contributing to host translation shutoff. Also cleaves host PABPC1, contributing to host translation shutoff. Cleaves host NLRP1, triggers host N-glycine-mediated degradation of the autoinhibitory NLRP1 N-terminal fragment. The sequence is that of Genome polyprotein from Homo sapiens (Human).